A 231-amino-acid polypeptide reads, in one-letter code: Antiholin-like protein LrgB (231 aa).

The next 5 helical transmembrane spans lie at 7–24, 34–56, 91–113, 149–171, and 207–229; these read PYFGIVVSLAAFGIGTFL, FTPLFVAMVLGIAFLKIGGFSYA, WWQIMASIIAGSICSVTIVYLLA, ITAFAVIFNAVIVYALGALFLKV, and ASIAVVVVGVVTVLVIPVFVQLI.

Belongs to the CidB/LrgB family. LrgB subfamily.

The protein localises to the cell membrane. Its function is as follows. Inhibits the expression or activity of extracellular murein hydrolases by interacting, possibly with LrgA, with the holin-like protein CidA. The LrgAB and CidA proteins may affect the proton motive force of the membrane. May be involved in programmed cell death (PCD), possibly triggering PCD in response to antibiotics and environmental stresses. The chain is Antiholin-like protein LrgB from Bacillus subtilis (strain 168).